The following is a 941-amino-acid chain: Protein BREAST CANCER SUSCEPTIBILITY 1 homolog (941 aa).

The RING-type zinc finger occupies 16–54 (CPICLSLYNSAVSLSCNHVFCNACIVKSMKMDATCPVCK). 2 disordered regions span residues 87–282 (FVSQ…ILPS) and 303–528 (KVKV…GKDD). Basic and acidic residues-rich tracts occupy residues 96–115 (SDKE…DKNR) and 125–136 (KRNEYGKTKEID). Residues 157-173 (LLQNLSAESLTKPTESV) show a composition bias toward polar residues. Over residues 175–196 (TAEKPKDYTENTVIRLDEHPSL) the composition is skewed to basic and acidic residues. Polar residues predominate over residues 216–236 (NSSQRTESDQLLGTTPVNVPS). The span at 242 to 255 (DSDHESPSKEDEQQ) shows a compositional bias: basic and acidic residues. The Nuclear localization signal 1 motif lies at 298–305 (QKKLPKVK). Composition is skewed to polar residues over residues 329 to 357 (GVSQ…SGTI) and 376 to 391 (SKAQ…NVSN). Basic and acidic residues-rich tracts occupy residues 428 to 453 (GKGD…EKPS) and 477 to 487 (KTSEKKLKLDS). The Nuclear localization signal 2 signature appears at 444–451 (EKRSPTEK). Over residues 489–498 (MISSKATQPH) the composition is skewed to polar residues. Residues 512–528 (DKQDSRNNRKSTVGKDD) show a composition bias toward basic and acidic residues. The segment at 561-612 (KFTCAFCQCSEDTEASGEMTHYYRGEPVSADFNGGSKVIHVHKNCAEWAPNV) adopts a C2HC pre-PHD-type zinc-finger fold. The PHD-type; degenerate zinc finger occupies 632-681 (ISCSCCGLKGAALGCYNKSCKNSFHVTCAKLIPECRWDNVKFVMLCPLDA). BRCT domains follow at residues 724 to 819 (KQFH…PYEI) and 840 to 941 (KKPK…LVLI).

Forms heterodimer with BARD1/ROW1. Expressed ubiquitously with highest levels in flower buds. Mostly expressed in flowers and siliques, and, to a lower extent, in roots, rosette leaves, inflorescence and young cauline leaves.

It is found in the nucleus. Plays a role in DNA repair and in cell-cycle control. Required for the repair of DNA double-strand breaks (DSBs), both natural and induced by genotoxic stress, by homologous recombination (HR). This Arabidopsis thaliana (Mouse-ear cress) protein is Protein BREAST CANCER SUSCEPTIBILITY 1 homolog.